The sequence spans 101 residues: Replication restart protein PriB (101 aa).

Residues 1-101 form the SSB domain; sequence MTTNNLVLAG…LHAENVELKT (101 aa).

This sequence belongs to the PriB family. As to quaternary structure, homodimer. Interacts with PriA and DnaT. Component of the replication restart primosome. Primosome assembly occurs via a 'hand-off' mechanism. PriA binds to replication forks, subsequently PriB then DnaT bind; DnaT then displaces ssDNA to generate the helicase loading substrate.

Involved in the restart of stalled replication forks, which reloads the replicative helicase on sites other than the origin of replication; the PriA-PriB pathway is the major replication restart pathway. During primosome assembly it facilitates complex formation between PriA and DnaT on DNA; stabilizes PriA on DNA. Stimulates the DNA unwinding activity of PriA helicase. This is Replication restart protein PriB from Shewanella pealeana (strain ATCC 700345 / ANG-SQ1).